Reading from the N-terminus, the 124-residue chain is Fluoride-specific ion channel FluC (124 aa).

4 consecutive transmembrane segments (helical) span residues 3-23 (VLLI…VSNL), 34-54 (IGTL…FIFI), 68-88 (LLLI…IETF), and 100-120 (ALNV…GVLI). Positions 75 and 78 each coordinate Na(+).

This sequence belongs to the fluoride channel Fluc/FEX (TC 1.A.43) family.

It is found in the cell inner membrane. It carries out the reaction fluoride(in) = fluoride(out). Its activity is regulated as follows. Na(+) is not transported, but it plays an essential structural role and its presence is essential for fluoride channel function. Its function is as follows. Fluoride-specific ion channel. Important for reducing fluoride concentration in the cell, thus reducing its toxicity. The polypeptide is Fluoride-specific ion channel FluC (Coxiella burnetii (strain CbuK_Q154) (Coxiella burnetii (strain Q154))).